A 77-amino-acid chain; its full sequence is Small ribosomal subunit protein bS20 (77 aa).

This sequence belongs to the bacterial ribosomal protein bS20 family.

Binds directly to 16S ribosomal RNA. This is Small ribosomal subunit protein bS20 from Streptococcus uberis (strain ATCC BAA-854 / 0140J).